A 1004-amino-acid polypeptide reads, in one-letter code: Sal-like protein 2 (1004 aa).

Disordered stretches follow at residues 1–33 (MSRR…EDHP), 51–122 (AHQN…EESS), 137–177 (GGGL…SGHL), 220–270 (PASP…EPPK), and 285–307 (PFSV…ALPG). The segment at 34–56 (QVCAKCCAQFSDPTEFLAHQNSC) adopts a C2H2-type 1; atypical zinc-finger fold. Positions 71–81 (NPSNSSASSAP) are enriched in low complexity. Residues 83–98 (PEGHSRSQVMDTEHSN) are compositionally biased toward basic and acidic residues. Low complexity predominate over residues 99–110 (PPDSGSSGAPDP). Residues 151-171 (PLPPESTPAPPPPPPPPPPPG) show a composition bias toward pro residues. Residue Ser243 is modified to Phosphoserine. 5 C2H2-type zinc fingers span residues 372–394 (HKCR…LRSH), 400–422 (YKCN…FHRH), 629–651 (NQCV…YGQH), 657–679 (FKCK…FVGH), and 689–711 (NSCP…VRMH). A disordered region spans residues 712-910 (LGGQIPNGGS…PGESSGRKAC (199 aa)). The segment covering 731 to 742 (QENSSEQSTASG) has biased composition (polar residues). A compositionally biased stretch (acidic residues) spans 756–779 (PEEEMSEEEEEDEEEEEDVTDEDS). A phosphoserine mark is found at Ser794, Ser799, and Ser803. Residues 800-809 (EEVSGAEEEV) are compositionally biased toward acidic residues. Positions 810–819 (ATSVAAPTTV) are enriched in low complexity. Residues 820-829 (KEMDSNEKAP) are compositionally biased toward basic and acidic residues. A compositionally biased stretch (pro residues) spans 832–841 (TLPPPPPPPD). Residues 896-910 (AMKKDPGESSGRKAC) are compositionally biased toward basic and acidic residues. Residue Lys908 forms a Glycyl lysine isopeptide (Lys-Gly) (interchain with G-Cter in ubiquitin) linkage. 2 consecutive C2H2-type zinc fingers follow at residues 908-930 (KACE…QKTH) and 937-961 (FTCV…LAHH).

Belongs to the sal C2H2-type zinc-finger protein family. Expressed throughout embryonic development. In adult predominantly in brain.

Its subcellular location is the nucleus. Functionally, probable transcription factor that plays a role in eye development before, during, and after optic fissure closure. This chain is Sal-like protein 2 (Sall2), found in Mus musculus (Mouse).